Reading from the N-terminus, the 238-residue chain is Uridylate kinase (238 aa).

Position 11-14 (11-14 (KLSG)) interacts with ATP. Glycine 52 is a binding site for UMP. Glycine 53 and arginine 57 together coordinate ATP. Residues aspartate 72 and 134–141 (TGFSYFTT) contribute to the UMP site. Positions 162, 168, and 171 each coordinate ATP.

This sequence belongs to the UMP kinase family. As to quaternary structure, homohexamer.

It localises to the cytoplasm. It catalyses the reaction UMP + ATP = UDP + ADP. The protein operates within pyrimidine metabolism; CTP biosynthesis via de novo pathway; UDP from UMP (UMPK route): step 1/1. With respect to regulation, inhibited by UTP. Its function is as follows. Catalyzes the reversible phosphorylation of UMP to UDP. This is Uridylate kinase from Mesoplasma florum (strain ATCC 33453 / NBRC 100688 / NCTC 11704 / L1) (Acholeplasma florum).